A 460-amino-acid polypeptide reads, in one-letter code: Bifunctional protein GlmU (460 aa).

Positions Met1–Arg235 are pyrophosphorylase. UDP-N-acetyl-alpha-D-glucosamine contacts are provided by residues Leu9–Gly12, Lys23, Gln76, and Gly81–Thr82. Asp109 lines the Mg(2+) pocket. UDP-N-acetyl-alpha-D-glucosamine is bound by residues Gly146, Glu161, Asn176, and Asn233. Residue Asn233 participates in Mg(2+) binding. The interval Val236–Asp256 is linker. Positions Gly257–Arg460 are N-acetyltransferase. The UDP-N-acetyl-alpha-D-glucosamine site is built by Arg338 and Lys356. His368 acts as the Proton acceptor in catalysis. UDP-N-acetyl-alpha-D-glucosamine is bound by residues Tyr371 and Asn382. Residues Asn391–Tyr392 and Ala428 each bind acetyl-CoA.

It in the N-terminal section; belongs to the N-acetylglucosamine-1-phosphate uridyltransferase family. In the C-terminal section; belongs to the transferase hexapeptide repeat family. As to quaternary structure, homotrimer. Mg(2+) is required as a cofactor.

It localises to the cytoplasm. The enzyme catalyses alpha-D-glucosamine 1-phosphate + acetyl-CoA = N-acetyl-alpha-D-glucosamine 1-phosphate + CoA + H(+). It carries out the reaction N-acetyl-alpha-D-glucosamine 1-phosphate + UTP + H(+) = UDP-N-acetyl-alpha-D-glucosamine + diphosphate. It participates in nucleotide-sugar biosynthesis; UDP-N-acetyl-alpha-D-glucosamine biosynthesis; N-acetyl-alpha-D-glucosamine 1-phosphate from alpha-D-glucosamine 6-phosphate (route II): step 2/2. Its pathway is nucleotide-sugar biosynthesis; UDP-N-acetyl-alpha-D-glucosamine biosynthesis; UDP-N-acetyl-alpha-D-glucosamine from N-acetyl-alpha-D-glucosamine 1-phosphate: step 1/1. It functions in the pathway bacterial outer membrane biogenesis; LPS lipid A biosynthesis. Functionally, catalyzes the last two sequential reactions in the de novo biosynthetic pathway for UDP-N-acetylglucosamine (UDP-GlcNAc). The C-terminal domain catalyzes the transfer of acetyl group from acetyl coenzyme A to glucosamine-1-phosphate (GlcN-1-P) to produce N-acetylglucosamine-1-phosphate (GlcNAc-1-P), which is converted into UDP-GlcNAc by the transfer of uridine 5-monophosphate (from uridine 5-triphosphate), a reaction catalyzed by the N-terminal domain. The chain is Bifunctional protein GlmU from Bifidobacterium animalis subsp. lactis (strain AD011).